The following is a 343-amino-acid chain: GTPase Obg (343 aa).

The region spanning 1 to 159 (MQFIDHATIC…RQLRLELKLL (159 aa)) is the Obg domain. One can recognise an OBG-type G domain in the interval 160-328 (AEVGLIGLPN…LLRLVWQWLD (169 aa)). GTP contacts are provided by residues 166–173 (GLPNAGKS), 191–195 (FTTLV), 213–216 (DIPG), 280–283 (NKID), and 309–311 (SSA). Mg(2+)-binding residues include serine 173 and threonine 193.

It belongs to the TRAFAC class OBG-HflX-like GTPase superfamily. OBG GTPase family. As to quaternary structure, monomer. It depends on Mg(2+) as a cofactor.

It is found in the cytoplasm. Its function is as follows. An essential GTPase which binds GTP, GDP and possibly (p)ppGpp with moderate affinity, with high nucleotide exchange rates and a fairly low GTP hydrolysis rate. Plays a role in control of the cell cycle, stress response, ribosome biogenesis and in those bacteria that undergo differentiation, in morphogenesis control. In Synechococcus elongatus (strain ATCC 33912 / PCC 7942 / FACHB-805) (Anacystis nidulans R2), this protein is GTPase Obg.